The chain runs to 126 residues: Fluoride-specific ion channel FluC (126 aa).

The next 4 membrane-spanning stretches (helical) occupy residues 2–22 (LTFA…GAWL), 37–57 (WGTL…VALI), 65–85 (AWIR…FSTF), and 101–121 (AAAY…LATV). Na(+)-binding residues include Gly-77 and Thr-80.

This sequence belongs to the fluoride channel Fluc/FEX (TC 1.A.43) family.

It localises to the cell inner membrane. The catalysed reaction is fluoride(in) = fluoride(out). Its activity is regulated as follows. Na(+) is not transported, but it plays an essential structural role and its presence is essential for fluoride channel function. In terms of biological role, fluoride-specific ion channel. Important for reducing fluoride concentration in the cell, thus reducing its toxicity. This chain is Fluoride-specific ion channel FluC, found in Bordetella parapertussis (strain 12822 / ATCC BAA-587 / NCTC 13253).